Consider the following 161-residue polypeptide: Cyclic pyranopterin monophosphate synthase (161 aa).

Residues methionine 78–histidine 80 and methionine 116–glutamate 117 each bind substrate. Aspartate 131 is a catalytic residue.

It belongs to the MoaC family. As to quaternary structure, homohexamer; trimer of dimers.

It catalyses the reaction (8S)-3',8-cyclo-7,8-dihydroguanosine 5'-triphosphate = cyclic pyranopterin phosphate + diphosphate. The protein operates within cofactor biosynthesis; molybdopterin biosynthesis. In terms of biological role, catalyzes the conversion of (8S)-3',8-cyclo-7,8-dihydroguanosine 5'-triphosphate to cyclic pyranopterin monophosphate (cPMP). The chain is Cyclic pyranopterin monophosphate synthase from Nitratidesulfovibrio vulgaris (strain ATCC 29579 / DSM 644 / CCUG 34227 / NCIMB 8303 / VKM B-1760 / Hildenborough) (Desulfovibrio vulgaris).